A 146-amino-acid chain; its full sequence is Large ribosomal subunit protein uL15 (146 aa).

The interval 1–54 (MNLTDLRPADGSKQSGNFRRGRGHGSGNGKTAGKGHKGQKARSGAPRVGFEGGQ) is disordered.

Belongs to the universal ribosomal protein uL15 family. As to quaternary structure, part of the 50S ribosomal subunit.

Its function is as follows. Binds to the 23S rRNA. The polypeptide is Large ribosomal subunit protein uL15 (Lachnoclostridium phytofermentans (strain ATCC 700394 / DSM 18823 / ISDg) (Clostridium phytofermentans)).